The chain runs to 608 residues: Microtubule-associated protein 70-3 (608 aa).

The interval M1–V23 is disordered. A coiled-coil region spans residues D40 to K346. The tract at residues I224–V458 is required for targeting to microtubules. 2 disordered regions span residues L354 to N493 and D570 to Q608. Polar residues predominate over residues S363–P379. Positions R402 to L421 are enriched in low complexity. The segment covering I476–N493 has biased composition (polar residues). Positions L542–K576 form a coiled coil. Residues T586 to Q608 are compositionally biased toward low complexity.

It belongs to the MAP70 family.

The protein resides in the cytoplasm. It is found in the cytoskeleton. In terms of biological role, plant-specific protein that interact with microtubules. The chain is Microtubule-associated protein 70-3 (MAP70.3) from Oryza sativa subsp. japonica (Rice).